The sequence spans 60 residues: UPF0434 protein YcaR (60 aa).

The protein belongs to the UPF0434 family.

The sequence is that of UPF0434 protein YcaR from Escherichia fergusonii (strain ATCC 35469 / DSM 13698 / CCUG 18766 / IAM 14443 / JCM 21226 / LMG 7866 / NBRC 102419 / NCTC 12128 / CDC 0568-73).